A 461-amino-acid chain; its full sequence is Kynureninase (461 aa).

Pyridoxal 5'-phosphate is bound by residues Leu114, Thr115, 142–145 (FPSD), Asp228, His231, and Tyr253. Lys254 bears the N6-(pyridoxal phosphate)lysine mark. Pyridoxal 5'-phosphate-binding residues include Trp288 and Asn316.

Belongs to the kynureninase family. As to quaternary structure, homodimer. It depends on pyridoxal 5'-phosphate as a cofactor.

The protein localises to the cytoplasm. It catalyses the reaction L-kynurenine + H2O = anthranilate + L-alanine + H(+). The catalysed reaction is 3-hydroxy-L-kynurenine + H2O = 3-hydroxyanthranilate + L-alanine + H(+). It participates in amino-acid degradation; L-kynurenine degradation; L-alanine and anthranilate from L-kynurenine: step 1/1. The protein operates within cofactor biosynthesis; NAD(+) biosynthesis; quinolinate from L-kynurenine: step 2/3. Functionally, catalyzes the cleavage of L-kynurenine (L-Kyn) and L-3-hydroxykynurenine (L-3OHKyn) into anthranilic acid (AA) and 3-hydroxyanthranilic acid (3-OHAA), respectively. In Candida albicans (strain SC5314 / ATCC MYA-2876) (Yeast), this protein is Kynureninase.